The chain runs to 281 residues: Energy-coupling factor transporter ATP-binding protein EcfA1 (281 aa).

The region spanning Ile7–Asp242 is the ABC transporter domain. Gly42–Ser49 provides a ligand contact to ATP. Glu168 serves as the catalytic Proton acceptor.

This sequence belongs to the ABC transporter superfamily. Energy-coupling factor EcfA family. As to quaternary structure, forms a stable energy-coupling factor (ECF) transporter complex composed of 2 membrane-embedded substrate-binding proteins (S component), 2 ATP-binding proteins (A component) and 2 transmembrane proteins (T component).

The protein localises to the cell membrane. Its function is as follows. ATP-binding (A) component of a common energy-coupling factor (ECF) ABC-transporter complex. Unlike classic ABC transporters this ECF transporter provides the energy necessary to transport a number of different substrates. The protein is Energy-coupling factor transporter ATP-binding protein EcfA1 of Bacillus subtilis (strain 168).